A 1214-amino-acid chain; its full sequence is Receptor-type guanylate cyclase gcy-19 (1214 aa).

Residues 1–18 form the signal peptide; the sequence is MEHLIFLLIFGGYSPSIA. Over 19–517 the chain is Extracellular; it reads QITSSTTTTT…PQTFVDQYGA (499 aa). 4 N-linked (GlcNAc...) asparagine glycosylation sites follow: asparagine 85, asparagine 363, asparagine 441, and asparagine 464. A helical membrane pass occupies residues 518 to 538; it reads LVFSIGGVLALAMLFLITCFF. Over 539–1214 the chain is Cytoplasmic; sequence YVLRQRKLER…FRRQETLALM (676 aa). Positions 572–859 constitute a Protein kinase domain; that stretch reads RMSKRSIQSG…KGNLMDHVFN (288 aa). The Guanylate cyclase domain maps to 917–1047; sequence TVFFSDVVKF…DTVNTASRME (131 aa). Positions 1116–1197 are disordered; it reads NSSNMAYNPE…EKAREIHNEE (82 aa). The span at 1133-1142 shows a compositional bias: acidic residues; the sequence is DDEDVDDESS. A compositionally biased stretch (basic and acidic residues) spans 1186–1197; the sequence is LEEKAREIHNEE.

This sequence belongs to the adenylyl cyclase class-4/guanylyl cyclase family. As to expression, expressed asymmetrically in ASE right (ASER) sensory neuron.

Its subcellular location is the cell membrane. It catalyses the reaction GTP = 3',5'-cyclic GMP + diphosphate. Functionally, guanylate cyclase involved in the production of the second messenger cGMP. This chain is Receptor-type guanylate cyclase gcy-19, found in Caenorhabditis briggsae.